The following is a 604-amino-acid chain: MTKEAGELNALKNRFRTDYCGQLGLDGEGREVRLGGWVHRIRDHGGLVFIDLRDHTGICQLVVQPEREELFELAGRLHAESVITIEGRVVARSSETINPRLASGSIEVVVSAIGVESHARPLPFPVADEVQTSEELRLKYRFIDLRREKIHENIIFRSRISAAIRRYLEERDFIEIQTPILTSSSPEGARDFLVPSRLHPGKFYALPQAPQQFKQLLMVAGFPRYFQIAPCFRDEDARADRSPGEFYQLDMEMAFIEQDDLFEILEGMFRHLTDTMSKKRITRFPFPRISYREVMDSYGTDKPDLRIPLKIEDVTPMFTDSGFKVFASNTKPGCAVKALVLKGRGTESRLFYDKAEKRARELGSAGLAYIQFREEGPKGPIVKFMTEPELQAMKDQLTLETGDVVFFAAGKWEAACKIMGGMRTYFGDLFTLDPDELSFCWIVDFPMFEYNEDAKKVDFSHNPFSMPQGEMEALETMDPLDVLAYQYDIVCNGIELSSGAIRNHKPEIMYKAFEIAGYSREEVDLRFGHMIEAFKLGAPPHGGIAPGLDRLVMILRDEQNIREVIAFPMNQQAQDLMMAAPSEVTGAQLRELHIRLDLPEEEKK.

An L-aspartate-binding site is contributed by glutamate 187. The aspartate stretch occupies residues 211 to 214 (QQFK). The L-aspartate site is built by arginine 233 and histidine 461. 233 to 235 (RDE) is a binding site for ATP. Glutamate 495 is an ATP binding site. Residue arginine 502 participates in L-aspartate binding. 547–550 (GLDR) lines the ATP pocket.

It belongs to the class-II aminoacyl-tRNA synthetase family. Type 1 subfamily. In terms of assembly, homodimer.

It localises to the cytoplasm. It carries out the reaction tRNA(Asx) + L-aspartate + ATP = L-aspartyl-tRNA(Asx) + AMP + diphosphate. In terms of biological role, aspartyl-tRNA synthetase with relaxed tRNA specificity since it is able to aspartylate not only its cognate tRNA(Asp) but also tRNA(Asn). Reaction proceeds in two steps: L-aspartate is first activated by ATP to form Asp-AMP and then transferred to the acceptor end of tRNA(Asp/Asn). The protein is Aspartate--tRNA(Asp/Asn) ligase of Chlorobium luteolum (strain DSM 273 / BCRC 81028 / 2530) (Pelodictyon luteolum).